A 556-amino-acid chain; its full sequence is Formate--tetrahydrofolate ligase (556 aa).

65 to 72 contacts ATP; that stretch reads TPAGEGKS.

This sequence belongs to the formate--tetrahydrofolate ligase family.

It carries out the reaction (6S)-5,6,7,8-tetrahydrofolate + formate + ATP = (6R)-10-formyltetrahydrofolate + ADP + phosphate. Its pathway is one-carbon metabolism; tetrahydrofolate interconversion. In Streptococcus agalactiae serotype V (strain ATCC BAA-611 / 2603 V/R), this protein is Formate--tetrahydrofolate ligase.